The chain runs to 479 residues: Cardiolipin synthase A (479 aa).

2 helical membrane-spanning segments follow: residues 8–28 (FFGY…LHAV) and 38–58 (IAWA…YLVF). 2 PLD phosphodiesterase domains span residues 218 to 245 (VNFR…GDEY) and 392 to 419 (QPGF…DNRS). Residues His-223, Lys-225, Asp-230, His-397, Lys-399, and Asp-404 contribute to the active site.

The protein belongs to the phospholipase D family. Cardiolipin synthase subfamily. ClsA sub-subfamily.

Its subcellular location is the cell inner membrane. The catalysed reaction is 2 a 1,2-diacyl-sn-glycero-3-phospho-(1'-sn-glycerol) = a cardiolipin + glycerol. Catalyzes the reversible phosphatidyl group transfer from one phosphatidylglycerol molecule to another to form cardiolipin (CL) (diphosphatidylglycerol) and glycerol. The sequence is that of Cardiolipin synthase A from Pseudomonas putida (strain W619).